Consider the following 348-residue polypeptide: Holliday junction branch migration complex subunit RuvB (348 aa).

The large ATPase domain (RuvB-L) stretch occupies residues 4 to 184 (ADRLIAASGR…FGIVQRLEFY (181 aa)). Residues Ile-23, Arg-24, Gly-65, Lys-68, Thr-69, Thr-70, 131 to 133 (EDF), Arg-174, Tyr-184, and Arg-221 contribute to the ATP site. Thr-69 provides a ligand contact to Mg(2+). Residues 185–255 (SDKDLATIVS…VADMALNLLD (71 aa)) form a small ATPAse domain (RuvB-S) region. The tract at residues 258 to 348 (ERGFDHSDRR…GGDFSEPGDE (91 aa)) is head domain (RuvB-H). Residues Arg-294, Arg-313, and Arg-318 each contribute to the DNA site.

Belongs to the RuvB family. In terms of assembly, homohexamer. Forms an RuvA(8)-RuvB(12)-Holliday junction (HJ) complex. HJ DNA is sandwiched between 2 RuvA tetramers; dsDNA enters through RuvA and exits via RuvB. An RuvB hexamer assembles on each DNA strand where it exits the tetramer. Each RuvB hexamer is contacted by two RuvA subunits (via domain III) on 2 adjacent RuvB subunits; this complex drives branch migration. In the full resolvosome a probable DNA-RuvA(4)-RuvB(12)-RuvC(2) complex forms which resolves the HJ.

It is found in the cytoplasm. It catalyses the reaction ATP + H2O = ADP + phosphate + H(+). The RuvA-RuvB-RuvC complex processes Holliday junction (HJ) DNA during genetic recombination and DNA repair, while the RuvA-RuvB complex plays an important role in the rescue of blocked DNA replication forks via replication fork reversal (RFR). RuvA specifically binds to HJ cruciform DNA, conferring on it an open structure. The RuvB hexamer acts as an ATP-dependent pump, pulling dsDNA into and through the RuvAB complex. RuvB forms 2 homohexamers on either side of HJ DNA bound by 1 or 2 RuvA tetramers; 4 subunits per hexamer contact DNA at a time. Coordinated motions by a converter formed by DNA-disengaged RuvB subunits stimulates ATP hydrolysis and nucleotide exchange. Immobilization of the converter enables RuvB to convert the ATP-contained energy into a lever motion, pulling 2 nucleotides of DNA out of the RuvA tetramer per ATP hydrolyzed, thus driving DNA branch migration. The RuvB motors rotate together with the DNA substrate, which together with the progressing nucleotide cycle form the mechanistic basis for DNA recombination by continuous HJ branch migration. Branch migration allows RuvC to scan DNA until it finds its consensus sequence, where it cleaves and resolves cruciform DNA. In Pseudomonas putida (strain GB-1), this protein is Holliday junction branch migration complex subunit RuvB.